Consider the following 318-residue polypeptide: 4-hydroxy-3-methylbut-2-enyl diphosphate reductase (318 aa).

Residue Cys12 participates in [4Fe-4S] cluster binding. 2 residues coordinate (2E)-4-hydroxy-3-methylbut-2-enyl diphosphate: His41 and His74. Residues His41 and His74 each coordinate dimethylallyl diphosphate. 2 residues coordinate isopentenyl diphosphate: His41 and His74. Residue Cys96 participates in [4Fe-4S] cluster binding. Residue His124 participates in (2E)-4-hydroxy-3-methylbut-2-enyl diphosphate binding. Residue His124 coordinates dimethylallyl diphosphate. Isopentenyl diphosphate is bound at residue His124. Residue Glu126 is the Proton donor of the active site. A (2E)-4-hydroxy-3-methylbut-2-enyl diphosphate-binding site is contributed by Thr167. Cys197 provides a ligand contact to [4Fe-4S] cluster. Ser225, Ser226, Asn227, and Ser269 together coordinate (2E)-4-hydroxy-3-methylbut-2-enyl diphosphate. Residues Ser225, Ser226, Asn227, and Ser269 each coordinate dimethylallyl diphosphate. Residues Ser225, Ser226, Asn227, and Ser269 each coordinate isopentenyl diphosphate.

Belongs to the IspH family. [4Fe-4S] cluster is required as a cofactor.

The catalysed reaction is isopentenyl diphosphate + 2 oxidized [2Fe-2S]-[ferredoxin] + H2O = (2E)-4-hydroxy-3-methylbut-2-enyl diphosphate + 2 reduced [2Fe-2S]-[ferredoxin] + 2 H(+). It carries out the reaction dimethylallyl diphosphate + 2 oxidized [2Fe-2S]-[ferredoxin] + H2O = (2E)-4-hydroxy-3-methylbut-2-enyl diphosphate + 2 reduced [2Fe-2S]-[ferredoxin] + 2 H(+). Its pathway is isoprenoid biosynthesis; dimethylallyl diphosphate biosynthesis; dimethylallyl diphosphate from (2E)-4-hydroxy-3-methylbutenyl diphosphate: step 1/1. It functions in the pathway isoprenoid biosynthesis; isopentenyl diphosphate biosynthesis via DXP pathway; isopentenyl diphosphate from 1-deoxy-D-xylulose 5-phosphate: step 6/6. Functionally, catalyzes the conversion of 1-hydroxy-2-methyl-2-(E)-butenyl 4-diphosphate (HMBPP) into a mixture of isopentenyl diphosphate (IPP) and dimethylallyl diphosphate (DMAPP). Acts in the terminal step of the DOXP/MEP pathway for isoprenoid precursor biosynthesis. The sequence is that of 4-hydroxy-3-methylbut-2-enyl diphosphate reductase from Francisella philomiragia subsp. philomiragia (strain ATCC 25017 / CCUG 19701 / FSC 153 / O#319-036).